The following is a 246-amino-acid chain: Triosephosphate isomerase (246 aa).

9 to 11 (NWK) is a binding site for substrate. Catalysis depends on His-99, which acts as the Electrophile. Glu-168 functions as the Proton acceptor in the catalytic mechanism. Substrate is bound by residues Gly-174, Ser-207, and 228 to 229 (GG).

It belongs to the triosephosphate isomerase family. As to quaternary structure, homodimer.

It is found in the cytoplasm. The enzyme catalyses D-glyceraldehyde 3-phosphate = dihydroxyacetone phosphate. It functions in the pathway carbohydrate biosynthesis; gluconeogenesis. The protein operates within carbohydrate degradation; glycolysis; D-glyceraldehyde 3-phosphate from glycerone phosphate: step 1/1. Involved in the gluconeogenesis. Catalyzes stereospecifically the conversion of dihydroxyacetone phosphate (DHAP) to D-glyceraldehyde-3-phosphate (G3P). This Prochlorococcus marinus (strain NATL1A) protein is Triosephosphate isomerase.